We begin with the raw amino-acid sequence, 185 residues long: Translocon-associated protein subunit gamma (185 aa).

Met-1 carries the post-translational modification N-acetylmethionine. Residues 1–27 are Lumenal-facing; the sequence is MAPKGGPKQQSEEDLLLQDFSRNLSAK. At Ser-11 the chain carries Phosphoserine. A helical membrane pass occupies residues 28–48; it reads SSALFFGNAFIVSAIPIWLYW. Over 49 to 54 the chain is Cytoplasmic; it reads RIWHMD. Residues 55–76 traverse the membrane as a helical segment; sequence LIQSAVLYSVMTLVSTYLVAFA. Residues 77–135 lie on the Lumenal side of the membrane; that stretch reads YKNVKFVLKHKVAQKREDAVSKEVTRKLSEADNRKMSRKEKDERILWKKNEVADYEATT. Ser-105 is modified (phosphoserine). The helical transmembrane segment at 136-157 threads the bilayer; it reads FSIFYNNTLFLVLVIVASFFIL. The Cytoplasmic segment spans residues 158-163; it reads KNFNPT. Residues 164–184 form a helical membrane-spanning segment; sequence VNYILSISASSGLIALLSTGS.

This sequence belongs to the TRAP-gamma family. As to quaternary structure, heterotetramer of TRAP-alpha, TRAP-beta, TRAP-delta and TRAP-gamma.

Its subcellular location is the endoplasmic reticulum membrane. Functionally, TRAP proteins are part of a complex whose function is to bind calcium to the ER membrane and thereby regulate the retention of ER resident proteins. The protein is Translocon-associated protein subunit gamma (SSR3) of Bos taurus (Bovine).